Here is a 99-residue protein sequence, read N- to C-terminus: Phosphoribosyl-ATP pyrophosphatase (99 aa).

Belongs to the PRA-PH family.

It localises to the cytoplasm. It carries out the reaction 1-(5-phospho-beta-D-ribosyl)-ATP + H2O = 1-(5-phospho-beta-D-ribosyl)-5'-AMP + diphosphate + H(+). It participates in amino-acid biosynthesis; L-histidine biosynthesis; L-histidine from 5-phospho-alpha-D-ribose 1-diphosphate: step 2/9. In Methanococcoides burtonii (strain DSM 6242 / NBRC 107633 / OCM 468 / ACE-M), this protein is Phosphoribosyl-ATP pyrophosphatase.